An 89-amino-acid chain; its full sequence is cAMP-regulated phosphoprotein 21 (89 aa).

The interval methionine 1–leucine 89 is disordered. Serine 2 bears the N-acetylserine mark. 2 positions are modified to phosphoserine: serine 33 and serine 56.

In terms of assembly, interacts with CALM1. Phosphorylation at Ser-56 favors interaction with CALM1.

The protein localises to the cytoplasm. Functionally, may act as a competitive inhibitor of calmodulin-dependent enzymes such as calcineurin in neurons. The chain is cAMP-regulated phosphoprotein 21 (ARPP21) from Bos taurus (Bovine).